Here is a 243-residue protein sequence, read N- to C-terminus: MARLWGALSLWPLWAAVPWGGAAAVGVRACSSTAAPDGVEGPALRRSYWRHLRRLVLGPPEPPFSHVCQVGDPVLRGVAAPVERAQLGGPELQRLTQRLVQVMRRRRCVGLSAPQLGVPRQVLALELPEALCRECPPRQRALRQMEPFPLRVFVNPSLRVLDSRLVTFPEGCESVAGFLACVPRFQAVQISGLDPNGEQVVWQASGWAARIIQHEMDHLQGCLFIDKMDSRTFTNVYWMKVND.

The N-terminal 39 residues, 1–39 (MARLWGALSLWPLWAAVPWGGAAAVGVRACSSTAAPDGV), are a transit peptide targeting the mitochondrion. Substrate is bound by residues glycine 71, proline 169, and glycine 171. Residues 165–175 (LVTFPEGCESV) form a hydrophobic dimerization interface region. 2 residues coordinate Co(2+): cysteine 172 and histidine 214. Glutamate 215 is a catalytic residue. Co(2+) is bound at residue histidine 218.

The protein belongs to the polypeptide deformylase family. In terms of assembly, homodimer. Co(2+) serves as cofactor. In terms of tissue distribution, ubiquitous.

Its subcellular location is the mitochondrion. It catalyses the reaction N-terminal N-formyl-L-methionyl-[peptide] + H2O = N-terminal L-methionyl-[peptide] + formate. Removes the formyl group from the N-terminal Met of newly synthesized proteins. This chain is Peptide deformylase, mitochondrial, found in Homo sapiens (Human).